The chain runs to 460 residues: Allantoinase (460 aa).

Zn(2+) is bound by residues H70, H72, K157, H193, H250, and D323. The residue at position 157 (K157) is an N6-carboxylysine.

This sequence belongs to the metallo-dependent hydrolases superfamily. Allantoinase family. As to quaternary structure, homotetramer. Requires Zn(2+) as cofactor. In terms of processing, carboxylation allows a single lysine to coordinate two zinc ions.

The enzyme catalyses (S)-allantoin + H2O = allantoate + H(+). Its pathway is nitrogen metabolism; (S)-allantoin degradation; allantoate from (S)-allantoin: step 1/1. In terms of biological role, catalyzes the conversion of allantoin (5-ureidohydantoin) to allantoic acid by hydrolytic cleavage of the five-member hydantoin ring. Involved in the utilization of purines as secondary nitrogen sources, when primary sources are limiting. This is Allantoinase (DAL1) from Saccharomyces cerevisiae (strain ATCC 204508 / S288c) (Baker's yeast).